The chain runs to 257 residues: RLA class II histocompatibility antigen, DP beta chain (257 aa).

The signal sequence occupies residues 1 to 29 (MRPCRSLRTAALAVVLTVLLHPVALGRAT). Residues 30 to 120 (PGESEQNYLW…LFQGLPVLLQ (91 aa)) are beta-1. Topologically, residues 30-224 (PGESEQNYLW…KAQSDSARSK (195 aa)) are extracellular. 2 disulfides stabilise this stretch: Cys-45–Cys-105 and Cys-143–Cys-199. Asn-49 carries an N-linked (GlcNAc...) asparagine glycan. Residues 121–214 (TQPRVSVSPS…SLDSPITVEW (94 aa)) form a beta-2 region. An Ig-like C1-type domain is found at 123-211 (PRVSVSPSKK…EHPSLDSPIT (89 aa)). The tract at residues 215-224 (KAQSDSARSK) is connecting peptide. A helical transmembrane segment spans residues 225 to 245 (MLAGVGGLVLGLVSLAVGVFM). At 246-257 (HRRSKKAQQGCR) the chain is on the cytoplasmic side.

This sequence belongs to the MHC class II family.

It is found in the membrane. This is RLA class II histocompatibility antigen, DP beta chain from Oryctolagus cuniculus (Rabbit).